A 1097-amino-acid polypeptide reads, in one-letter code: Protein toll (1097 aa).

The first 27 residues, 1–27 (MSRLKAASELALLVIILQLLQWPGSEA), serve as a signal peptide directing secretion. The Extracellular segment spans residues 28–807 (SFGRDACSEM…ICPAEKGVFI (780 aa)). 3 cysteine pairs are disulfide-bonded: Cys34-Cys45, Cys43-Cys56, and Cys79-Cys107. N-linked (GlcNAc...) asparagine glycosylation is found at Asn80, Asn140, and Asn175. LRR repeat units lie at residues 175–195 (NLSH…LFDD), 198–219 (NLES…IFGK), 222–243 (KLKQ…DFEG), 246–267 (SVLG…VFAH), 270–291 (NVTD…LFDH), 294–314 (HLNE…PSRL), 320–340 (ELQI…LFEH), 343–364 (QITN…LLEH), 367–388 (NLLS…LFAH), 391–412 (NLTD…IFSN), 415–436 (NLVT…AFVS), 439–460 (GLRH…LDIM), 474–495 (GLLT…WKNT), 498–521 (QLRE…AFLS), and 523–544 (NRLH…EDVH). Residue Asn235 is glycosylated (N-linked (GlcNAc...) asparagine). Residues Asn270 and Asn275 are each glycosylated (N-linked (GlcNAc...) asparagine). N-linked (GlcNAc...) asparagine glycosylation is present at Asn346. N-linked (GlcNAc...) asparagine glycosylation occurs at Asn391. 3 N-linked (GlcNAc...) asparagine glycosylation sites follow: Asn482, Asn508, and Asn528. One can recognise an LRRCT 1 domain in the interval 561–620 (NPLVCDCTILWFIQLVRGVHKPQYSRQFKLRTDRLVCSQPNVLEGTPVRQIEPQTLICPL). Cystine bridges form between Cys565–Cys597, Cys567–Cys618, Cys631–Cys637, and Cys635–Cys650. The LRRNT domain occupies 622-663 (FSDDPRERKCPRGCNCHVRTYDKALVINCHSGNLTHVPRLPN). 6 N-linked (GlcNAc...) asparagine glycosylation sites follow: Asn654, Asn677, Asn703, Asn715, Asn730, and Asn738. 3 LRR repeats span residues 669 to 690 (QLME…NTPG), 693 to 713 (SVTS…DQLP), and 715 to 738 (NLTH…GFLN). An LRRCT 2 domain is found at 751-801 (NPWMCDCTAKPLLLFTQDNFERIGDRNEMMCVNAEMPTRMVELSTNDICPA). 2 cysteine pairs are disulfide-bonded: Cys755/Cys781 and Cys757/Cys799. The chain crosses the membrane as a helical span at residues 808–828 (ALAVVIALTGLLAGFTAALYY). At 829–1097 (KFQTEIKIWL…INTNAKQSDV (269 aa)) the chain is on the cytoplasmic side. In terms of domain architecture, TIR spans 857-993 (KKFDAFISYS…WFWDKLRFAL (137 aa)).

The protein belongs to the Toll-like receptor family. As to quaternary structure, in the absence of ligand, forms a low-affinity disulfide-linked homodimer. In the presence of ligand, crystal structures show one Tl molecule bound to a spaetzle C-106 homodimer. However, the active complex probably consists of two Tl molecules bound to a spaetzle C-106 homodimer. This is supported by in vitro experiments which also show binding of the spaetzle C-106 dimer to 2 Tl receptors. Ligand binding induces conformational changes in the extracellular domain of Tl. This may enable a secondary homodimerization interface at the C-terminus of the Tl extracellular domain. In terms of tissue distribution, in early embryos, concentrated in the pseudocleavage furrows that form transiently between nuclei before cellularization and in the cleavage furrows during cellularization (at protein level). Later, found on cells in the mesectoderm, stomodeum, proctodeum, anterior and posterior midguts, splanchnopleura, salivary gland placode and adjacent to the segmentally repeated tracheal placodes (at protein level). During and after germ band shortening, localized in a number of cell types, including the salivary gland, foregut, hindgut, Malpighian tubules and epidermis (at protein level). In embryos, high expression in M13 with comparatively low expression in M12.

It is found in the cell membrane. Its subcellular location is the cytoplasm. Functionally, receptor for the cleaved activated form of spz, spaetzle C-106. Binding to spaetzle C-106 activates the Toll signaling pathway and induces expression of the antifungal peptide drosomycin. Component of the extracellular signaling pathway that establishes dorsal-ventral polarity in the embryo. Promotes heterophilic cellular adhesion. Involved in synaptic targeting of motoneurons RP5 and V to muscle 12 (M12); functions as a repulsive cue inhibiting motoneuron synapse formation on muscle 13 (M13) to guide RP5 and V to the neighboring M12, where its expression is repressed by tey. May also function in embryonic neuronal survival and the synaptic targeting of SNa motoneurons. This chain is Protein toll, found in Drosophila melanogaster (Fruit fly).